Here is a 430-residue protein sequence, read N- to C-terminus: Adenylosuccinate synthetase (430 aa).

GTP contacts are provided by residues 13 to 19 (GDEGKGK) and 41 to 43 (GHT). The active-site Proton acceptor is Asp14. Residues Asp14 and Gly41 each contribute to the Mg(2+) site. Residues 14 to 17 (DEGK), 39 to 42 (NAGH), Thr130, Arg144, Gln225, Thr240, and Arg304 contribute to the IMP site. Residue His42 is the Proton donor of the active site. 300–306 (ATTGRKR) is a binding site for substrate. GTP contacts are provided by residues Arg306, 332–334 (KLD), and 414–416 (STG).

It belongs to the adenylosuccinate synthetase family. Homodimer. Mg(2+) serves as cofactor.

It localises to the cytoplasm. It catalyses the reaction IMP + L-aspartate + GTP = N(6)-(1,2-dicarboxyethyl)-AMP + GDP + phosphate + 2 H(+). It participates in purine metabolism; AMP biosynthesis via de novo pathway; AMP from IMP: step 1/2. Functionally, plays an important role in the de novo pathway of purine nucleotide biosynthesis. Catalyzes the first committed step in the biosynthesis of AMP from IMP. In Teredinibacter turnerae (strain ATCC 39867 / T7901), this protein is Adenylosuccinate synthetase.